An 86-amino-acid chain; its full sequence is Exodeoxyribonuclease 7 small subunit (86 aa).

Residues 64–86 are disordered; that stretch reads SNPETVQDKTDTDEPDSNEFSLT.

The protein belongs to the XseB family. In terms of assembly, heterooligomer composed of large and small subunits.

The protein resides in the cytoplasm. The catalysed reaction is Exonucleolytic cleavage in either 5'- to 3'- or 3'- to 5'-direction to yield nucleoside 5'-phosphates.. Bidirectionally degrades single-stranded DNA into large acid-insoluble oligonucleotides, which are then degraded further into small acid-soluble oligonucleotides. The protein is Exodeoxyribonuclease 7 small subunit of Akkermansia muciniphila (strain ATCC BAA-835 / DSM 22959 / JCM 33894 / BCRC 81048 / CCUG 64013 / CIP 107961 / Muc).